The following is a 489-amino-acid chain: Protein nucleotidyltransferase YdiU (489 aa).

ATP-binding residues include glycine 88, glycine 90, arginine 91, lysine 111, aspartate 123, glycine 124, arginine 174, and arginine 181. Residue aspartate 250 is the Proton acceptor of the active site. Asparagine 251 and aspartate 260 together coordinate Mg(2+). Aspartate 260 contacts ATP.

Belongs to the SELO family. It depends on Mg(2+) as a cofactor. The cofactor is Mn(2+).

It catalyses the reaction L-seryl-[protein] + ATP = 3-O-(5'-adenylyl)-L-seryl-[protein] + diphosphate. The catalysed reaction is L-threonyl-[protein] + ATP = 3-O-(5'-adenylyl)-L-threonyl-[protein] + diphosphate. The enzyme catalyses L-tyrosyl-[protein] + ATP = O-(5'-adenylyl)-L-tyrosyl-[protein] + diphosphate. It carries out the reaction L-histidyl-[protein] + UTP = N(tele)-(5'-uridylyl)-L-histidyl-[protein] + diphosphate. It catalyses the reaction L-seryl-[protein] + UTP = O-(5'-uridylyl)-L-seryl-[protein] + diphosphate. The catalysed reaction is L-tyrosyl-[protein] + UTP = O-(5'-uridylyl)-L-tyrosyl-[protein] + diphosphate. Its function is as follows. Nucleotidyltransferase involved in the post-translational modification of proteins. It can catalyze the addition of adenosine monophosphate (AMP) or uridine monophosphate (UMP) to a protein, resulting in modifications known as AMPylation and UMPylation. The chain is Protein nucleotidyltransferase YdiU from Vibrio parahaemolyticus serotype O3:K6 (strain RIMD 2210633).